A 385-amino-acid chain; its full sequence is Probable alpha-galactosidase (385 aa).

A signal peptide spans 1-19; the sequence is MMKIAATLLATIALATVNA. 2 cysteine pairs are disulfide-bonded: Cys40–Cys72 and Cys119–Cys149. Catalysis depends on Asp147, which acts as the Nucleophile. Residue 180–184 coordinates substrate; the sequence is DWGYE. Asp202 functions as the Proton donor in the catalytic mechanism.

This sequence belongs to the glycosyl hydrolase 27 family.

The enzyme catalyses Hydrolysis of terminal, non-reducing alpha-D-galactose residues in alpha-D-galactosides, including galactose oligosaccharides, galactomannans and galactolipids.. This is Probable alpha-galactosidase (melA) from Dictyostelium discoideum (Social amoeba).